The primary structure comprises 537 residues: Cytochrome P450 monooxygenase yanC (537 aa).

The first 21 residues, 1-21 (MALVHLTALAACGLLLVILRA), serve as a signal peptide directing secretion. Cys449 serves as a coordination point for heme.

It belongs to the cytochrome P450 family. Heme serves as cofactor.

It participates in secondary metabolite biosynthesis; terpenoid biosynthesis. Functionally, cytochrome P450 monooxygenase; part of the gene cluster that mediates the biosynthesis of yanuthone D, a fungal isoprenoid epoxycyclohexenone that acts as an antibiotic against fungi and bacteria. The first step of the pathway is the synthesis of 6-methylsalicylic acid (6-MSA) by the polyketide synthase yanA. 6-MSA is then converted to m-cresol by the decarboxylase yanB. The cytochrome P450 monooxygenase yanC then catalyzes the oxidation of m-cresol to toluquinol. Epoxidation of toluquinol is then performed by the short chain dehydrogenase yanD, with the help of yanE, and a further prenylation by yanG leads to 7-deacetoxyyanuthone A. The next step is the hydroxylation of C-22 of 7-deacetoxyyanuthone A by the cytochrome P450 monooxygenase yanH to yield 22-deacetylyanuthone A. O-Mevalon transferase yanI then attaches mevalon to the hydroxyl group of 22-deacetylyanuthone A to produce yanuthone E. Finally, the FAD-dependent monooxygenase yanF oxidizes the hydroxyl group at C15 of yanuthone E to form yanuthone D. Furthermore, several branching points in the pathway lead to the production of yanuthones F and G from 7-deacetoxyyanuthone A; yanuthones H and I from 22-deacetylyanuthone A; and yanuthone J from yanuthone E. YanC is also involved in the synthesis of yanuthone X1 which does not have 6-methylsalicylic acid (6-MSA) as precursor. This Aspergillus niger (strain ATCC 1015 / CBS 113.46 / FGSC A1144 / LSHB Ac4 / NCTC 3858a / NRRL 328 / USDA 3528.7) protein is Cytochrome P450 monooxygenase yanC.